The following is a 425-amino-acid chain: Serine hydroxymethyltransferase 2 (425 aa).

(6S)-5,6,7,8-tetrahydrofolate is bound by residues leucine 121 and 125-127 (GHL). Position 230 is an N6-(pyridoxal phosphate)lysine (lysine 230).

It belongs to the SHMT family. Homodimer. Pyridoxal 5'-phosphate serves as cofactor.

The protein localises to the cytoplasm. The enzyme catalyses (6R)-5,10-methylene-5,6,7,8-tetrahydrofolate + glycine + H2O = (6S)-5,6,7,8-tetrahydrofolate + L-serine. It functions in the pathway one-carbon metabolism; tetrahydrofolate interconversion. It participates in amino-acid biosynthesis; glycine biosynthesis; glycine from L-serine: step 1/1. In terms of biological role, catalyzes the reversible interconversion of serine and glycine with tetrahydrofolate (THF) serving as the one-carbon carrier. This reaction serves as the major source of one-carbon groups required for the biosynthesis of purines, thymidylate, methionine, and other important biomolecules. Also exhibits THF-independent aldolase activity toward beta-hydroxyamino acids, producing glycine and aldehydes, via a retro-aldol mechanism. The protein is Serine hydroxymethyltransferase 2 of Mycobacterium tuberculosis (strain CDC 1551 / Oshkosh).